The following is a 173-amino-acid chain: T-cell surface glycoprotein CD3 gamma chain (173 aa).

The signal sequence occupies residues 1 to 22 (MEQGKHLAGLILAVFLLQGTMA). The Extracellular segment spans residues 23–111 (HVKEVKVDDN…NCIELNPSTV (89 aa)). The Ig-like domain maps to 24-94 (VKEVKVDDNR…GSNNQSKSLQ (71 aa)). A disulfide bridge links Cys42 with Cys83. N-linked (GlcNAc...) asparagine glycans are attached at residues Asn45 and Asn88. The chain crosses the membrane as a helical span at residues 112-132 (AGFIFTEIVSIFLLAVGVYFI). Topologically, residues 133 to 173 (AGQEGVRQSRASDKQTLLNNDQLYQPLKEREDDQYSHLRKN) are cytoplasmic. The residue at position 141 (Ser141) is a Phosphoserine. Residue Ser144 is modified to Phosphoserine; by PKC. One can recognise an ITAM domain in the interval 145 to 173 (DKQTLLNNDQLYQPLKEREDDQYSHLRKN). A Di-leucine motif motif is present at residues 149–150 (LL).

The TCR-CD3 complex is composed of a CD3D/CD3E and a CD3G/CD3E heterodimers that preferentially associate with TCRalpha and TCRbeta, respectively, to form TCRalpha/CD3E/CD3G and TCRbeta/CD3G/CD3E trimers. In turn, the hexamer interacts with CD3Z homodimer to form the TCR-CD3 complex. Alternatively, TCRalpha and TCRbeta can be replaced by TCRgamma and TCRdelta. In terms of processing, phosphorylated on Tyr residues after T-cell receptor triggering by LCK in association with CD4/CD8. Phosphorylated also by PKC; leading to the TCR complex down-regulation. Post-translationally, phosphorylated on Tyr residues after T-cell receptor triggering by LCK in association with CD4/CD8.

It localises to the cell membrane. Functionally, part of the TCR-CD3 complex present on T-lymphocyte cell surface that plays an essential role in adaptive immune response. When antigen presenting cells (APCs) activate T-cell receptor (TCR), TCR-mediated signals are transmitted across the cell membrane by the CD3 chains CD3D, CD3E, CD3G and CD3Z. All CD3 chains contain immunoreceptor tyrosine-based activation motifs (ITAMs) in their cytoplasmic domain. Upon TCR engagement, these motifs become phosphorylated by Src family protein tyrosine kinases LCK and FYN, resulting in the activation of downstream signaling pathways. In addition to this role of signal transduction in T-cell activation, CD3G plays an essential role in the dynamic regulation of TCR expression at the cell surface. Indeed, constitutive TCR cycling is dependent on the di-leucine-based (diL) receptor-sorting motif present in CD3G. This is T-cell surface glycoprotein CD3 gamma chain (CD3G) from Bos taurus (Bovine).